Consider the following 263-residue polypeptide: Regulatory protein RecX (263 aa).

It belongs to the RecX family.

The protein resides in the cytoplasm. In terms of biological role, modulates RecA activity. The polypeptide is Regulatory protein RecX (Bacillus velezensis (strain DSM 23117 / BGSC 10A6 / LMG 26770 / FZB42) (Bacillus amyloliquefaciens subsp. plantarum)).